The sequence spans 556 residues: Formate--tetrahydrofolate ligase (556 aa).

Position 65-72 (65-72) interacts with ATP; sequence TPAGEGKS.

Belongs to the formate--tetrahydrofolate ligase family.

It catalyses the reaction (6S)-5,6,7,8-tetrahydrofolate + formate + ATP = (6R)-10-formyltetrahydrofolate + ADP + phosphate. It participates in one-carbon metabolism; tetrahydrofolate interconversion. The protein is Formate--tetrahydrofolate ligase of Streptococcus suis (strain 98HAH33).